A 264-amino-acid polypeptide reads, in one-letter code: Teichoic acids export ATP-binding protein TagH (264 aa).

The ABC transporter domain occupies 5–243; the sequence is VNIKNVTKEY…YEAFLNDFKK (239 aa). ATP is bound at residue 57-64; it reads GINGSGKS.

It belongs to the ABC transporter superfamily. Teichoic acids exporter (TC 3.A.1.104.1) family. In terms of assembly, the complex is composed of two ATP-binding proteins (TagH) and two transmembrane proteins (TagG).

Its subcellular location is the cell membrane. It carries out the reaction ATP + H2O + teichoic acidSide 1 = ADP + phosphate + teichoic acidSide 2.. In terms of biological role, part of the ABC transporter complex TagGH involved in teichoic acids export. Responsible for energy coupling to the transport system. This Staphylococcus aureus (strain Mu50 / ATCC 700699) protein is Teichoic acids export ATP-binding protein TagH.